A 341-amino-acid polypeptide reads, in one-letter code: MRALYFRTTTLSTFFILCSLASNDIPRTGGNKIVQPPKPNILKQGCPSDLLHSRALRSIQLACRSHPATVISAFEGIQEGLQNCANRLRFQQWDCSEAGNIMHDPPLLRQGFRESSLIWALSSASAAWGVATACAQGWIDDCACNNHMGQNEYEFGGCTHGVQHGITASRKLLTKVGAVNSLLRKVEKHNLKAGRLAIKKTLISSCKCHGVSGSCQQKTCWKRTATLEHITDYLVEKYARAKLYTDDSVVKTTDLIYLEASPDVCKVKSVAGRVCAWRNETHTQGDCDRLCCGNGFSIRHEVVRVKCDCEFVWCCNLVCKDCIQHRWISTCNGTPPKSLIF.

Residues 1–21 form the signal peptide; the sequence is MRALYFRTTTLSTFFILCSLA. Disulfide bonds link Cys84/Cys95, Cys134/Cys142, Cys144/Cys158, Cys206/Cys220, Cys208/Cys215, Cys265/Cys292, Cys275/Cys287, Cys291/Cys331, Cys307/Cys322, Cys309/Cys319, and Cys314/Cys315. A lipid anchor (O-palmitoleoyl serine; by mom-1) is attached at Ser212. N-linked (GlcNAc...) asparagine glycosylation occurs at Asn279.

It belongs to the Wnt family. Palmitoleoylation is required for efficient binding to frizzled receptors. Depalmitoleoylation leads to Wnt signaling pathway inhibition.

Its subcellular location is the secreted. The protein localises to the extracellular space. It localises to the extracellular matrix. Its function is as follows. Ligand for members of the frizzled family of seven transmembrane receptors. Affects male tail development, vulval precursor cell specification and egg laying. Involved in morphogenesis by influencing polarity of asymmetric cell divisions of the B, U, and F cells in the male, and the T cell in males and hermaphrodites. Controls spindle orientation in B-gamma cell division during male copulatory spicule development. Involved in specification of the P7.p lineage during vulval development. Has a role in providing polarity and default lin-17 localization in axon development and positioning of neuromuscular synapses in DA9 regions by negatively regulating synaptogenesis. This is Abnormal cell lineage protein 44 from Caenorhabditis briggsae.